Reading from the N-terminus, the 143-residue chain is 3-hydroxyacyl-[acyl-carrier-protein] dehydratase FabZ (143 aa).

H49 is a catalytic residue.

Belongs to the thioester dehydratase family. FabZ subfamily.

It localises to the cytoplasm. It catalyses the reaction a (3R)-hydroxyacyl-[ACP] = a (2E)-enoyl-[ACP] + H2O. Involved in unsaturated fatty acids biosynthesis. Catalyzes the dehydration of short chain beta-hydroxyacyl-ACPs and long chain saturated and unsaturated beta-hydroxyacyl-ACPs. This is 3-hydroxyacyl-[acyl-carrier-protein] dehydratase FabZ from Ehrlichia chaffeensis (strain ATCC CRL-10679 / Arkansas).